The primary structure comprises 482 residues: Ras GTPase-activating protein-binding protein 2 (482 aa).

The region spanning 11–133 (VGREFVRQYY…FYVHNDMFRY (123 aa)) is the NTF2 domain. The span at 140–158 (DSEPELDEESEDEVEEEQE) shows a compositional bias: acidic residues. Disordered stretches follow at residues 140–170 (DSEP…VQEN) and 187–318 (EPLE…EQND). Ser141, Ser149, and Ser225 each carry phosphoserine. The tract at residues 142–220 (EPELDEESED…PQVEEKHLEE (79 aa)) is acidic disordered region. A compositionally biased stretch (basic and acidic residues) spans 191-225 (ESSHEPEPEPESETKTEELKPQVEEKHLEELEEKS). Position 227 is a phosphothreonine (Thr227). Residues 247–264 (ASVTSKNLPPSGTVSSSG) are compositionally biased toward polar residues. Lys281 is covalently cross-linked (Glycyl lysine isopeptide (Lys-Gly) (interchain with G-Cter in SUMO2)). The span at 290 to 300 (RVREQRPRERP) shows a compositional bias: basic and acidic residues. The RRM domain occupies 331 to 409 (HQLFVGNLPH…VRLNVEEKKT (79 aa)). Lys392 is subject to N6-succinyllysine. The RG-rich region stretch occupies residues 404 to 476 (VEEKKTRAAR…GRGTGQMEGR (73 aa)). A compositionally biased stretch (basic and acidic residues) spans 408 to 432 (KTRAARERETRGGGDDRRDIRRNDR). Residues 408–482 (KTRAARERET…MEGRFTGQRR (75 aa)) form a disordered region. Gly residues predominate over residues 433–445 (GPGGPRGIVGGGM). Arg457 is subject to Omega-N-methylarginine. Ser466 carries the post-translational modification Phosphoserine. Arg468 is subject to Omega-N-methylarginine.

In terms of assembly, forms homooligomers. Forms heterodimers with G3BP1. Interacts with NFKBIA (via N-terminus). Interacts (via NTF2 domain) with USP10; inhibiting stress granule formation. Interacts (via NTF2 domain) with CAPRIN1; promoting stress granule formation. Associates (via RG-rich region) with 40S ribosome subunits. Interacts with PABPC1.

Its subcellular location is the cytoplasm. The protein resides in the stress granule. Its activity is regulated as follows. Under physiological conditions, G3BP2 adopts a compact state that is stabilized by intramolecular interactions between the RG-rich and the acidic regions that inhibit phase separation. Upon stress, polysomes disassemble and mRNAs are released in an unfolded protein-free state. Binding of unfolded mRNA to G3BP2 outcompetes the intramolecular interactions and RNA-bound G3BP2 adopts an expanded conformation in which the RG-rich region becomes exposed to engage in protein-protein and protein-RNA interactions, allowing physical cross-linking of RNA molecules to form protein-RNA condensates, leading to liquid-liquid phase separation (LLPS). Functionally, scaffold protein that plays an essential role in cytoplasmic stress granule formation which acts as a platform for antiviral signaling. Plays an essential role in stress granule formation. Stress granules are membraneless compartments that store mRNAs and proteins, such as stalled translation pre-initiation complexes, in response to stress. Promotes formation of stress granules phase-separated membraneless compartment by undergoing liquid-liquid phase separation (LLPS) upon unfolded RNA-binding: functions as a molecular switch that triggers RNA-dependent LLPS in response to a rise in intracellular free RNA concentrations. The sequence is that of Ras GTPase-activating protein-binding protein 2 (G3bp2) from Mus musculus (Mouse).